A 72-amino-acid polypeptide reads, in one-letter code: Prokaryotic ubiquitin-like protein Pup (72 aa).

Over residues Met-1 to Gln-10 the composition is skewed to gly residues. Positions Met-1 to Asp-45 are disordered. The stretch at Gln-10–Glu-60 forms a coiled coil. The tract at residues Gln-28 to Phe-66 is ARC ATPase binding. A compositionally biased stretch (basic and acidic residues) spans Leu-33–Asp-42. Gln-72 carries the deamidated glutamine modification. Residue Gln-72 forms an Isoglutamyl lysine isopeptide (Gln-Lys) (interchain with K-? in acceptor proteins) linkage.

It belongs to the prokaryotic ubiquitin-like protein family. In terms of assembly, strongly interacts with the proteasome-associated ATPase ARC through a hydrophobic interface; the interacting region of Pup lies in its C-terminal half. There is one Pup binding site per ARC hexamer ring. Is modified by deamidation of its C-terminal glutamine to glutamate by the deamidase Dop, a prerequisite to the subsequent pupylation process.

Its pathway is protein degradation; proteasomal Pup-dependent pathway. Functionally, protein modifier that is covalently attached to lysine residues of substrate proteins, thereby targeting them for proteasomal degradation. The tagging system is termed pupylation. In Streptomyces griseus subsp. griseus (strain JCM 4626 / CBS 651.72 / NBRC 13350 / KCC S-0626 / ISP 5235), this protein is Prokaryotic ubiquitin-like protein Pup.